The chain runs to 432 residues: Queuine tRNA-ribosyltransferase accessory subunit 2 (432 aa).

The Zn(2+) site is built by Cys-329, Cys-331, Cys-334, and His-360. The disordered stretch occupies residues Gly-390–Ala-432. Positions Leu-422–Ala-432 are enriched in basic and acidic residues.

It belongs to the queuine tRNA-ribosyltransferase family. QTRT2 subfamily. As to quaternary structure, heterodimer of a catalytic subunit and an accessory subunit. Zn(2+) is required as a cofactor.

It is found in the cytoplasm. Its function is as follows. Non-catalytic subunit of the queuine tRNA-ribosyltransferase (TGT) that catalyzes the base-exchange of a guanine (G) residue with queuine (Q) at position 34 (anticodon wobble position) in tRNAs with GU(N) anticodons (tRNA-Asp, -Asn, -His and -Tyr), resulting in the hypermodified nucleoside queuosine (7-(((4,5-cis-dihydroxy-2-cyclopenten-1-yl)amino)methyl)-7-deazaguanosine). This is Queuine tRNA-ribosyltransferase accessory subunit 2 from Anopheles gambiae (African malaria mosquito).